The primary structure comprises 328 residues: Phosphatidylglycerol--prolipoprotein diacylglyceryl transferase (328 aa).

Transmembrane regions (helical) follow at residues 15–35 (VIQG…ILIS), 57–77 (IFMF…STLV), and 106–126 (GMAI…TINT). R156 contacts a 1,2-diacyl-sn-glycero-3-phospho-(1'-sn-glycerol). 2 consecutive transmembrane segments (helical) span residues 242 to 262 (GFIF…IEYL) and 289 to 309 (ISMG…WIIV).

This sequence belongs to the Lgt family.

It localises to the cell inner membrane. It catalyses the reaction L-cysteinyl-[prolipoprotein] + a 1,2-diacyl-sn-glycero-3-phospho-(1'-sn-glycerol) = an S-1,2-diacyl-sn-glyceryl-L-cysteinyl-[prolipoprotein] + sn-glycerol 1-phosphate + H(+). Its pathway is protein modification; lipoprotein biosynthesis (diacylglyceryl transfer). In terms of biological role, catalyzes the transfer of the diacylglyceryl group from phosphatidylglycerol to the sulfhydryl group of the N-terminal cysteine of a prolipoprotein, the first step in the formation of mature lipoproteins. The sequence is that of Phosphatidylglycerol--prolipoprotein diacylglyceryl transferase from Borreliella burgdorferi (strain ATCC 35210 / DSM 4680 / CIP 102532 / B31) (Borrelia burgdorferi).